The following is a 61-amino-acid chain: Small ribosomal subunit protein uS14B (61 aa).

Residues Cys24, Cys27, Cys40, and Cys43 each coordinate Zn(2+).

This sequence belongs to the universal ribosomal protein uS14 family. Zinc-binding uS14 subfamily. In terms of assembly, part of the 30S ribosomal subunit. Contacts proteins S3 and S10. It depends on Zn(2+) as a cofactor.

Functionally, binds 16S rRNA, required for the assembly of 30S particles and may also be responsible for determining the conformation of the 16S rRNA at the A site. The polypeptide is Small ribosomal subunit protein uS14B (Mycobacteroides abscessus (strain ATCC 19977 / DSM 44196 / CCUG 20993 / CIP 104536 / JCM 13569 / NCTC 13031 / TMC 1543 / L948) (Mycobacterium abscessus)).